The primary structure comprises 131 residues: uncharacterized protein (131 aa).

Residues 8-124 enclose the Response regulatory domain; the sequence is DILVVDDDPD…ELIRLVQQYC (117 aa). Aspartate 57 carries the 4-aspartylphosphate modification.

This is an uncharacterized protein from Leptolyngbya boryana (Plectonema boryanum).